The sequence spans 347 residues: NADH-ubiquinone oxidoreductase chain 2 (347 aa).

The next 11 membrane-spanning stretches (helical) occupy residues 1 to 21, 25 to 45, 60 to 80, 96 to 116, 127 to 147, 149 to 169, 178 to 198, 202 to 222, 239 to 259, 274 to 294, and 326 to 346; these read MNPM…SIVM, HWFL…PVLM, FLTQ…NLMF, MLLT…FWVP, GLIL…QIYP, INTN…GWGG, IMAY…IYNP, LLNL…LIFA, IITI…PLTG, NSVI…FFYM, and MMPL…FILL.

The protein belongs to the complex I subunit 2 family. As to quaternary structure, core subunit of respiratory chain NADH dehydrogenase (Complex I) which is composed of 45 different subunits. Interacts with TMEM242.

The protein resides in the mitochondrion inner membrane. It catalyses the reaction a ubiquinone + NADH + 5 H(+)(in) = a ubiquinol + NAD(+) + 4 H(+)(out). Its function is as follows. Core subunit of the mitochondrial membrane respiratory chain NADH dehydrogenase (Complex I) that is believed to belong to the minimal assembly required for catalysis. Complex I functions in the transfer of electrons from NADH to the respiratory chain. The immediate electron acceptor for the enzyme is believed to be ubiquinone. This chain is NADH-ubiquinone oxidoreductase chain 2, found in Suncus etruscus (Etruscan shrew).